A 431-amino-acid chain; its full sequence is ATP-dependent RNA helicase DBP8 (431 aa).

The Q motif motif lies at 2-30 (ADFKSLGLSKWLTESLRAMKITQPTAIQK). Residues 33-209 (IPKILEGRDC…NAPVQKGKPP (177 aa)) form the Helicase ATP-binding domain. Residue 46–53 (AKTGSGKT) participates in ATP binding. The DEAD box motif lies at 155–158 (DEAD). The Helicase C-terminal domain maps to 242 to 389 (YLYQLLTCEE…TNKVHDTAVI (148 aa)). Residues 404–431 (LMAMQKENFGERKRQQKKKQNDGKSLRS) are disordered. Residues 411–431 (NFGERKRQQKKKQNDGKSLRS) show a composition bias toward basic and acidic residues.

This sequence belongs to the DEAD box helicase family. DDX49/DBP8 subfamily. In terms of assembly, interacts with ESF2.

Its subcellular location is the nucleus. The protein resides in the nucleolus. The catalysed reaction is ATP + H2O = ADP + phosphate + H(+). In terms of biological role, ATP-binding RNA helicase involved in 40S ribosomal subunit biogenesis and is required for the normal formation of 18S rRNAs through pre-rRNA processing at A0, A1 and A2 sites. Required for vegetative growth. The sequence is that of ATP-dependent RNA helicase DBP8 (DBP8) from Saccharomyces cerevisiae (strain YJM789) (Baker's yeast).